The primary structure comprises 501 residues: 25-hydroxyvitamin D-1 alpha hydroxylase, mitochondrial (501 aa).

C448 provides a ligand contact to heme.

Belongs to the cytochrome P450 family. Heme is required as a cofactor. Kidney.

Its subcellular location is the mitochondrion membrane. It catalyses the reaction calcidiol + 2 reduced [adrenodoxin] + O2 + 2 H(+) = calcitriol + 2 oxidized [adrenodoxin] + H2O. The enzyme catalyses secalciferol + 2 reduced [adrenodoxin] + O2 + 2 H(+) = calcitetrol + 2 oxidized [adrenodoxin] + H2O. The protein operates within hormone biosynthesis; cholecalciferol biosynthesis. Functionally, catalyzes the conversion of 25-hydroxyvitamin D3 (25(OH)D3) to 1-alpha,25-dihydroxyvitamin D3 (1alpha,25(OH)(2)D3), and of 24,25-dihydroxyvitamin D3 (24,25(OH)(2)D3) to 1-alpha,24,25-trihydroxyvitamin D3 (1alpha,24,25(OH)(3)D3). Is also active with 25-hydroxy-24-oxo-vitamin D3. Plays an important role in normal bone growth, calcium metabolism, and tissue differentiation. This chain is 25-hydroxyvitamin D-1 alpha hydroxylase, mitochondrial (Cyp27b1), found in Rattus norvegicus (Rat).